Here is a 73-residue protein sequence, read N- to C-terminus: Translation initiation factor IF-1 (73 aa).

One can recognise an S1-like domain in the interval 1 to 72 (MAKDEIIEFE…SKGRITYRGK (72 aa)).

It belongs to the IF-1 family. Component of the 30S ribosomal translation pre-initiation complex which assembles on the 30S ribosome in the order IF-2 and IF-3, IF-1 and N-formylmethionyl-tRNA(fMet); mRNA recruitment can occur at any time during PIC assembly.

It is found in the cytoplasm. In terms of biological role, one of the essential components for the initiation of protein synthesis. Stabilizes the binding of IF-2 and IF-3 on the 30S subunit to which N-formylmethionyl-tRNA(fMet) subsequently binds. Helps modulate mRNA selection, yielding the 30S pre-initiation complex (PIC). Upon addition of the 50S ribosomal subunit IF-1, IF-2 and IF-3 are released leaving the mature 70S translation initiation complex. In Psychrobacter arcticus (strain DSM 17307 / VKM B-2377 / 273-4), this protein is Translation initiation factor IF-1.